Consider the following 250-residue polypeptide: Pyrroloquinoline-quinone synthase (250 aa).

The protein belongs to the PqqC family.

The enzyme catalyses 6-(2-amino-2-carboxyethyl)-7,8-dioxo-1,2,3,4,7,8-hexahydroquinoline-2,4-dicarboxylate + 3 O2 = pyrroloquinoline quinone + 2 H2O2 + 2 H2O + H(+). It functions in the pathway cofactor biosynthesis; pyrroloquinoline quinone biosynthesis. Its function is as follows. Ring cyclization and eight-electron oxidation of 3a-(2-amino-2-carboxyethyl)-4,5-dioxo-4,5,6,7,8,9-hexahydroquinoline-7,9-dicarboxylic-acid to PQQ. This Ectopseudomonas mendocina (strain ymp) (Pseudomonas mendocina) protein is Pyrroloquinoline-quinone synthase.